Reading from the N-terminus, the 207-residue chain is MKLLNLKIMNKKRLKDQLYLLVILEKNLIKLELLSFSNLIRRILLKEIYNFKVSTISIFLFNSNKFCYKIHEFTKVEEVKNNLVSFLILLKEIKFRSYYKLKTKRTFALLKIKQFTQVFLTDIILPNNFKILSIDNNLIKLNSLDINLKVLLELHKSKGYNFNPVKKVNYIEENNVYFEIYTNQTSTPLEVLVKSLKIIKLETYLAI.

Belongs to the RNA polymerase alpha chain family. In plastids the minimal PEP RNA polymerase catalytic core is composed of four subunits: alpha, beta, beta', and beta''. When a (nuclear-encoded) sigma factor is associated with the core the holoenzyme is formed, which can initiate transcription.

It localises to the plastid. Its subcellular location is the chloroplast. It catalyses the reaction RNA(n) + a ribonucleoside 5'-triphosphate = RNA(n+1) + diphosphate. Its function is as follows. DNA-dependent RNA polymerase catalyzes the transcription of DNA into RNA using the four ribonucleoside triphosphates as substrates. This is DNA-directed RNA polymerase subunit alpha (rpoA) from Euglena myxocylindracea.